The chain runs to 433 residues: Polygalacturonase ADPG2 (433 aa).

The signal sequence occupies residues 1 to 24 (MARCTNLVTVFLLWALLMFSWCKA). 5 PbH1 repeats span residues 223–249 (CSNV…HITN), 250–271 (TQNI…SIES), 273–293 (SQNV…SIGS), 303–324 (VSGV…RIKT), and 332–353 (ASNI…IIDQ). The active-site Proton donor is the Asp-264. His-287 is an active-site residue.

Belongs to the glycosyl hydrolase 28 family. As to expression, expressed in roots and in the abscission zone of the sepals, petals and stamens of flowers, at the base of cauline leaves and in the basal cell of trichomes from senescing leaves. Found at the site of lateral root emergence, in the dehiscence zone of anthers and maturing siliques. Also expressed early in anther development, at the time of microspore separation. Expressed in germinating seeds, at the point at which the radicle broke through the seed coat. Not expressed at the junction between the seed and the funiculus or in the dehiscence zone of anthers or pods.

It is found in the secreted. It localises to the cell wall. The enzyme catalyses (1,4-alpha-D-galacturonosyl)n+m + H2O = (1,4-alpha-D-galacturonosyl)n + (1,4-alpha-D-galacturonosyl)m.. Its function is as follows. Polygalacturonase involved in cell separation in the final stages of pod shatter, in anther dehiscence and in floral organ abscission. In Arabidopsis thaliana (Mouse-ear cress), this protein is Polygalacturonase ADPG2 (ADPG2).